A 495-amino-acid polypeptide reads, in one-letter code: Beta-galactoside alpha-2,6-sialyltransferase 2 (495 aa).

Topologically, residues 1 to 10 (MKPHLKQWRQ) are cytoplasmic. Residues 11–31 (GMLCGVFAWGLFFVVIFLYFT) form a helical; Signal-anchor for type II membrane protein membrane-spanning segment. Topologically, residues 32–495 (DSSPAKPAPS…LQAVRCPPGA (464 aa)) are lumenal. 2 disordered regions span residues 63–90 (GASE…LRTW) and 107–165 (GRTS…EDGE). Residues 134 to 143 (PEGARPPRAA) show a composition bias toward low complexity. Basic residues predominate over residues 144 to 153 (PGRRAKRGPR). 3 cysteine pairs are disulfide-bonded: cysteine 225–cysteine 491, cysteine 268–cysteine 420, and cysteine 438–cysteine 449. Asparagine 279 and asparagine 309 each carry an N-linked (GlcNAc...) asparagine glycan.

It belongs to the glycosyltransferase 29 family.

It is found in the golgi apparatus. Its subcellular location is the golgi stack membrane. It catalyses the reaction a beta-D-galactoside + CMP-N-acetyl-beta-neuraminate = an N-acetyl-alpha-neuraminyl-(2-&gt;6)-beta-D-galactosyl derivative + CMP + H(+). Functionally, transfers sialic acid from the donor of substrate CMP-sialic acid to galactose containing acceptor substrates. Has alpha-2,6-sialyltransferase activity toward oligosaccharides that have the Gal-beta-1,4-GlcNAc sequence at the non-reducing end of their carbohydrate groups, but it has weak or no activities toward glycoproteins and glycolipids. The chain is Beta-galactoside alpha-2,6-sialyltransferase 2 (ST6GAL2) from Bos taurus (Bovine).